Consider the following 482-residue polypeptide: Mannan endo-1,4-beta-mannosidase (482 aa).

The first 21 residues, 1–21 (MARTLRYLLCGILALAAGSNA), serve as a signal peptide directing secretion. One can recognise a CBM6 domain in the interval 42 to 160 (TTYEAEDAIL…WYLVDSITLT (119 aa)). N-linked (GlcNAc...) asparagine glycosylation is found at N171 and N300. A GH26 domain is found at 181–474 (ASARALYDYL…YTSDYVLTLD (294 aa)). E332 (proton donor) is an active-site residue. The active-site Nucleophile is E422.

It belongs to the glycosyl hydrolase 26 family.

It localises to the secreted. With respect to regulation, the activity is completely impaired by Ag(+), partially inhibited by Zn(2+), and enhanced by Co(2+), Ni(2+) and Cu(2+) by 22.6, 14.5 and 20.8 %, respectively. Ca(2+), Na(+), Mg(2+), Mn(2+), urea and EDTA do not significantly affect the mannanase activity. Functionally, mannan endo-1,4-beta-mannosidase that exhibits high activity against konjac glucomannan and carob galactomannan, as well as a lower activity toward beta-mannan. Shows no activity against barley beta-glucan, birchwood xylan, and low viscosity carboxymethyl cellulose (CMC). Has the ability to hydrolyze manno-oligosaccharides such as M4 which is degraded slightly to M3 and M1, M5 which is mainly degraded to M4 and M1, and M6 which is mostly hydrolyzed to M4 and M2. Shows no activity toward M2 and M3 manno-oligosaccharides. The polypeptide is Mannan endo-1,4-beta-mannosidase (Thermothelomyces thermophilus (strain ATCC 42464 / BCRC 31852 / DSM 1799) (Sporotrichum thermophile)).